A 666-amino-acid polypeptide reads, in one-letter code: uncharacterized protein (666 aa).

It belongs to the MG032/MG096/MG288 family.

This is an uncharacterized protein from Mycoplasma pneumoniae (strain ATCC 29342 / M129 / Subtype 1) (Mycoplasmoides pneumoniae).